The primary structure comprises 181 residues: Dual-action ribosomal maturation protein DarP (181 aa).

Residues 1 to 24 (MTGIKRPMSQYQDDNEWEDWGPSK) are disordered.

This sequence belongs to the DarP family.

The protein resides in the cytoplasm. Its function is as follows. Member of a network of 50S ribosomal subunit biogenesis factors which assembles along the 30S-50S interface, preventing incorrect 23S rRNA structures from forming. Promotes peptidyl transferase center (PTC) maturation. This chain is Dual-action ribosomal maturation protein DarP, found in Aeromonas hydrophila subsp. hydrophila (strain ATCC 7966 / DSM 30187 / BCRC 13018 / CCUG 14551 / JCM 1027 / KCTC 2358 / NCIMB 9240 / NCTC 8049).